The primary structure comprises 560 residues: Thermosome subunit alpha (560 aa).

Over residues 535–547 (SEKKGGEGSKEES) the composition is skewed to basic and acidic residues. The tract at residues 535-560 (SEKKGGEGSKEESGGEGGAGTPSLGD) is disordered.

The protein belongs to the TCP-1 chaperonin family. In terms of assembly, forms a heterooligomeric complex of two stacked nine-membered rings; one of alpha and the other of beta subunits. Sometimes called a 'rosettasome'.

Its subcellular location is the cytoplasm. The enzyme catalyses ATP + H2O = ADP + phosphate + H(+). In terms of biological role, molecular chaperone; binds unfolded polypeptides in vitro, stimulates protein folding and has ATPase activity. One of the most abundant proteins in the cell at all temperatures. This is Thermosome subunit alpha (thsA) from Saccharolobus shibatae (strain ATCC 51178 / DSM 5389 / JCM 8931 / NBRC 15437 / B12) (Sulfolobus shibatae).